A 355-amino-acid polypeptide reads, in one-letter code: 3-dehydroquinate synthase (355 aa).

NAD(+) is bound by residues 69 to 74 (DGEQHK), 103 to 107 (GVIGD), 127 to 128 (TT), Lys-140, Lys-149, and 167 to 170 (TLQT). Positions 182, 245, and 262 each coordinate Zn(2+).

Belongs to the sugar phosphate cyclases superfamily. Dehydroquinate synthase family. It depends on Co(2+) as a cofactor. The cofactor is Zn(2+). NAD(+) is required as a cofactor.

Its subcellular location is the cytoplasm. It carries out the reaction 7-phospho-2-dehydro-3-deoxy-D-arabino-heptonate = 3-dehydroquinate + phosphate. It participates in metabolic intermediate biosynthesis; chorismate biosynthesis; chorismate from D-erythrose 4-phosphate and phosphoenolpyruvate: step 2/7. Functionally, catalyzes the conversion of 3-deoxy-D-arabino-heptulosonate 7-phosphate (DAHP) to dehydroquinate (DHQ). The protein is 3-dehydroquinate synthase of Pseudoalteromonas atlantica (strain T6c / ATCC BAA-1087).